Reading from the N-terminus, the 160-residue chain is Cyclic pyranopterin monophosphate synthase (160 aa).

Residues 75 to 77 (LCH) and 113 to 114 (ME) contribute to the substrate site. Aspartate 128 is a catalytic residue.

Belongs to the MoaC family. In terms of assembly, homohexamer; trimer of dimers.

It carries out the reaction (8S)-3',8-cyclo-7,8-dihydroguanosine 5'-triphosphate = cyclic pyranopterin phosphate + diphosphate. It participates in cofactor biosynthesis; molybdopterin biosynthesis. In terms of biological role, catalyzes the conversion of (8S)-3',8-cyclo-7,8-dihydroguanosine 5'-triphosphate to cyclic pyranopterin monophosphate (cPMP). The chain is Cyclic pyranopterin monophosphate synthase from Haemophilus influenzae (strain PittEE).